The following is a 285-amino-acid chain: ATP synthase subunit a (285 aa).

The next 6 helical transmembrane spans lie at 41–61 (TWHVDTLAWSIGLGLIFLWIF), 102–122 (IAPLALTIFVWVFLMNLMDLI), 164–184 (LGVFILMVGFAIKIKGIGGFI), 197–217 (VFVQILLIPFNLLLELIALVS), 226–246 (LFGNLYAGELIFILIGAIGFM), and 252–272 (FVWAVFHILVITLQAFLFMML).

The protein belongs to the ATPase A chain family. In terms of assembly, F-type ATPases have 2 components, CF(1) - the catalytic core - and CF(0) - the membrane proton channel. CF(1) has five subunits: alpha(3), beta(3), gamma(1), delta(1), epsilon(1). CF(0) has three main subunits: a(1), b(2) and c(9-12). The alpha and beta chains form an alternating ring which encloses part of the gamma chain. CF(1) is attached to CF(0) by a central stalk formed by the gamma and epsilon chains, while a peripheral stalk is formed by the delta and b chains.

Its subcellular location is the cell inner membrane. In terms of biological role, key component of the proton channel; it plays a direct role in the translocation of protons across the membrane. This is ATP synthase subunit a from Pseudoalteromonas translucida (strain TAC 125).